Here is a 336-residue protein sequence, read N- to C-terminus: Dihydroorotate dehydrogenase (quinone) (336 aa).

FMN-binding positions include 62 to 66 (AGLDK) and T86. K66 is a binding site for substrate. Residue 111-115 (NRMGF) participates in substrate binding. Residues N139 and N172 each contribute to the FMN site. N172 contacts substrate. The Nucleophile role is filled by S175. N177 provides a ligand contact to substrate. The FMN site is built by K217 and T245. 246 to 247 (NT) is a binding site for substrate. FMN-binding positions include G268, G297, and 318–319 (YS).

This sequence belongs to the dihydroorotate dehydrogenase family. Type 2 subfamily. In terms of assembly, monomer. It depends on FMN as a cofactor.

It is found in the cell membrane. It carries out the reaction (S)-dihydroorotate + a quinone = orotate + a quinol. The protein operates within pyrimidine metabolism; UMP biosynthesis via de novo pathway; orotate from (S)-dihydroorotate (quinone route): step 1/1. Functionally, catalyzes the conversion of dihydroorotate to orotate with quinone as electron acceptor. In Salmonella choleraesuis (strain SC-B67), this protein is Dihydroorotate dehydrogenase (quinone).